The primary structure comprises 192 residues: Casparian strip membrane protein 1 (192 aa).

Residues 1 to 30 (MSTTVDVPESSNVAKGKAIAVARPGGWKKG) lie on the Cytoplasmic side of the membrane. Residues 31-51 (LAIMDFILRLGGIAASLGAAA) form a helical membrane-spanning segment. Topologically, residues 52–80 (TMGTSDQTLPFFTQFFQFEASYDSFTTFQ) are extracellular. The chain crosses the membrane as a helical span at residues 81–101 (FFVITMALVAGYLVLSLPFSV). The Cytoplasmic portion of the chain corresponds to 102-113 (VAIIRPHAPGPR). Residues 114 to 134 (LFLIILDTVFLTLATASGASA) form a helical membrane-spanning segment. The Extracellular segment spans residues 135-166 (AAIVYLAHNGNQDSNWLAICNQFGDFCAQTSG). A helical transmembrane segment spans residues 167-187 (AVVASFVAVVILVLLVIMSAL). Over 188-192 (ALRRH) the chain is Cytoplasmic.

Belongs to the Casparian strip membrane proteins (CASP) family. As to quaternary structure, homodimer and heterodimers.

The protein resides in the cell membrane. Functionally, regulates membrane-cell wall junctions and localized cell wall deposition. Required for establishment of the Casparian strip membrane domain (CSD) and the subsequent formation of Casparian strips, a cell wall modification of the root endodermis that determines an apoplastic barrier between the intraorganismal apoplasm and the extraorganismal apoplasm and prevents lateral diffusion. The chain is Casparian strip membrane protein 1 from Vigna unguiculata (Cowpea).